Reading from the N-terminus, the 162-residue chain is E3 ubiquitin-protein ligase LAP (162 aa).

The Cytoplasmic portion of the chain corresponds to 1 to 78 (MEGSDNTNTH…RWKCSFMYCN (78 aa)). The RING-CH-type zinc finger occupies 3–61 (GSDNTNTHCWICKDEYNVSTNFCNCKNEFKIVHKNCLEEWINFSHNTKCKICNGKYNIK). Zn(2+) contacts are provided by C11, C14, C25, C27, H35, C38, C51, and C54. A helical membrane pass occupies residues 79-99 (VPAICVSLICLLLLPLTILLV). Topologically, residues 100 to 121 (KFNLKSMLENIENRDLIALISA) are lumenal. The chain crosses the membrane as a helical span at residues 122–142 (MAYSLPCVVGFITVVHILIAL). Residues 143-162 (YDYYLAAKSDNTTYQVYEYI) are Cytoplasmic-facing.

It belongs to the poxviridae LAP protein family.

It localises to the host membrane. Its subcellular location is the host Golgi apparatus. It is found in the host trans-Golgi network membrane. The protein localises to the host early endosome membrane. The enzyme catalyses S-ubiquitinyl-[E2 ubiquitin-conjugating enzyme]-L-cysteine + [acceptor protein]-L-lysine = [E2 ubiquitin-conjugating enzyme]-L-cysteine + N(6)-ubiquitinyl-[acceptor protein]-L-lysine.. In terms of biological role, E3 ubiquitin-protein ligase which promotes ubiquitination and subsequent degradation of host MHC-I and CD4 molecules, presumably to prevent lysis of infected cells by cytotoxic T-lymphocytes and NK cell. Binds target molecules through transmembrane interaction. The result of this ubiquitination is the enhancement of the endocytosis of the target chain and the delivery to the lysosome, where it is proteolytically destroyed. The sequence is that of E3 ubiquitin-protein ligase LAP (LW010) from Lumpy skin disease virus (LSDV).